The primary structure comprises 171 residues: Peptide methionine sulfoxide reductase MsrA (171 aa).

The active site involves Cys-13.

Belongs to the MsrA Met sulfoxide reductase family.

The enzyme catalyses L-methionyl-[protein] + [thioredoxin]-disulfide + H2O = L-methionyl-(S)-S-oxide-[protein] + [thioredoxin]-dithiol. The catalysed reaction is [thioredoxin]-disulfide + L-methionine + H2O = L-methionine (S)-S-oxide + [thioredoxin]-dithiol. Has an important function as a repair enzyme for proteins that have been inactivated by oxidation. Catalyzes the reversible oxidation-reduction of methionine sulfoxide in proteins to methionine. This is Peptide methionine sulfoxide reductase MsrA from Mycolicibacterium paratuberculosis (strain ATCC BAA-968 / K-10) (Mycobacterium paratuberculosis).